The primary structure comprises 195 residues: 3-isopropylmalate dehydratase small subunit (195 aa).

The protein belongs to the LeuD family. LeuD type 1 subfamily. Heterodimer of LeuC and LeuD.

The catalysed reaction is (2R,3S)-3-isopropylmalate = (2S)-2-isopropylmalate. The protein operates within amino-acid biosynthesis; L-leucine biosynthesis; L-leucine from 3-methyl-2-oxobutanoate: step 2/4. Catalyzes the isomerization between 2-isopropylmalate and 3-isopropylmalate, via the formation of 2-isopropylmaleate. In Salinispora arenicola (strain CNS-205), this protein is 3-isopropylmalate dehydratase small subunit.